Reading from the N-terminus, the 292-residue chain is Putative rRNA 2'-O-methyltransferase fibrillarin 3 (292 aa).

The disordered stretch occupies residues 1-58 (MKPPQRGRGGGVRGGRGLARGGEGSAVRGSGRGGESGRGRGPGRVKSESDGGIKGGSK). Residues 7-42 (GRGGGVRGGRGLARGGEGSAVRGSGRGGESGRGRGP) show a composition bias toward gly residues. S-adenosyl-L-methionine contacts are provided by residues 146-147 (YT), 165-166 (EH), 190-191 (DA), and 210-213 (DVNH).

The protein belongs to the methyltransferase superfamily. Fibrillarin family. Component of box C/D small nucleolar ribonucleoprotein (snoRNP) particles. As to expression, not detectable by RT-PCR.

It localises to the nucleus. Its subcellular location is the nucleolus. The enzyme catalyses L-glutaminyl-[histone H2A] + S-adenosyl-L-methionine = N(5)-methyl-L-glutaminyl-[histone H2A] + S-adenosyl-L-homocysteine + H(+). Functionally, S-adenosyl-L-methionine-dependent methyltransferase that has the ability to methylate both RNAs and proteins. Involved in pre-rRNA processing. Utilizes the methyl donor S-adenosyl-L-methionine to catalyze the site-specific 2'-hydroxyl methylation of ribose moieties in pre-ribosomal RNA. Site specificity is provided by a guide RNA that base pairs with the substrate. Methylation occurs at a characteristic distance from the sequence involved in base pairing with the guide RNA. Also acts as a protein methyltransferase by mediating methylation of 'Gln-105' of histone H2A (H2AQ105me), a modification that impairs binding of the FACT complex and is specifically present at 35S ribosomal DNA locus. The protein is Putative rRNA 2'-O-methyltransferase fibrillarin 3 (FIB3) of Arabidopsis thaliana (Mouse-ear cress).